The sequence spans 155 residues: Acetylaranotin biosynthesis cluster protein L (155 aa).

It functions in the pathway mycotoxin biosynthesis. Nonribosomal peptide synthetase; part of the gene cluster that mediates the biosynthesis of acetylaranotin, a member of the epipolythiodioxopiperazine (ETP) class of toxins characterized by a disulfide-bridged cyclic dipeptide. The first step of acetylaranotin biosynthesis is performed by the NRPS ataP which produces diketopiperazine cyclo-L-Phe-L-Phe via the condensation of 2 phenylalanines (L-Phe). The ataC domain of ataTC then catalyzes the formation of bishydroxylation of cyclo-L-Phe-L-Phe. The glutathione S-transferase domain ataG in ataIMG further catalyzes the conjugation of two glutathiones to the bishydroxylated intermediate. Next, the dipeptidase ataJ removes the Glu residues. The following step is performed by the carbon sulfur lyase domain ataI of ataIMG which may convert the bis-cysteinyl adduct to yield an epidithiol intermediate. The ataT domain from ataTC then catalyzes the oxidation of the free dithiols, followed by a cyclization step catalyzed by the cytochrome P450 ataF. AtaF probably acts as an epoxidase to promote a dual epoxidation formation at C8 and C9 along with C8' and C9', followed by the spontaneous nucleophilic attack of the amide nitrogens N10 and N10' to yield an intermediate with the pyrrolidine partial structure. The final steps of acetylaranotin biosynthesis involve the acetylation and ring rearrangement of an epitetrathiodiketopiperazine intermediate to produce acetylaranotin. AtaH probably catalyzes the acetylation of epitetrathiodiketopiperazine to produce a diacetate and ataY is responsible for the formation of the dihydrooxepin moiety that converts the diacetate intermediate to acetylaranotin via acetylapoaranotin. Both enzymes could function independently in the absence of the other. The specific function of ataL within the pathway has still to be determined. The acetylaranotin bis-thiomethyltransferase ataS located outside of acetylaranotin gene cluster is the main thiomethyltransferase responsible for converting acetylaranotin and its related intermediates to their methylated forms. The chain is Acetylaranotin biosynthesis cluster protein L from Aspergillus terreus (strain NIH 2624 / FGSC A1156).